The chain runs to 358 residues: Phospho-N-acetylmuramoyl-pentapeptide-transferase (358 aa).

A run of 10 helical transmembrane segments spans residues 27-47 (IYAM…VIRV), 73-93 (TMGG…WADL), 97-117 (YIWT…VDDY), 134-154 (MFWQ…KPGF), 170-190 (LWFW…NAVN), 197-217 (GLAI…SYVA), 233-253 (GAGE…GFLW), 261-281 (VFMG…IAVI), 286-306 (ILLV…IFQV), and 335-355 (KIIV…ISTL).

This sequence belongs to the glycosyltransferase 4 family. MraY subfamily. Mg(2+) is required as a cofactor.

Its subcellular location is the cell inner membrane. The enzyme catalyses UDP-N-acetyl-alpha-D-muramoyl-L-alanyl-gamma-D-glutamyl-meso-2,6-diaminopimeloyl-D-alanyl-D-alanine + di-trans,octa-cis-undecaprenyl phosphate = di-trans,octa-cis-undecaprenyl diphospho-N-acetyl-alpha-D-muramoyl-L-alanyl-D-glutamyl-meso-2,6-diaminopimeloyl-D-alanyl-D-alanine + UMP. Its pathway is cell wall biogenesis; peptidoglycan biosynthesis. Catalyzes the initial step of the lipid cycle reactions in the biosynthesis of the cell wall peptidoglycan: transfers peptidoglycan precursor phospho-MurNAc-pentapeptide from UDP-MurNAc-pentapeptide onto the lipid carrier undecaprenyl phosphate, yielding undecaprenyl-pyrophosphoryl-MurNAc-pentapeptide, known as lipid I. The chain is Phospho-N-acetylmuramoyl-pentapeptide-transferase from Pelobacter propionicus (strain DSM 2379 / NBRC 103807 / OttBd1).